Consider the following 549-residue polypeptide: Probable chaperonin-like protein PrmG (549 aa).

This sequence belongs to the chaperonin (HSP60) family.

In terms of biological role, probably plays an essential role in the productive folding of PrmA, and thus in the formation of the active PrmABCD complex. The chain is Probable chaperonin-like protein PrmG (prmG) from Rhodococcus jostii (strain RHA1).